The primary structure comprises 390 residues: 5-hydroxytryptamine receptor 1B (390 aa).

At 1-46 (MEEPGAQCAPPPPAGSETWVPQANLSSAPSQNCSAKDYIYQDSISL) the chain is on the extracellular side. Residues Asn-24 and Asn-32 are each glycosylated (N-linked (GlcNAc...) asparagine). A helical transmembrane segment spans residues 47–72 (PWKVLLVMLLALITLATTLSNAFVIA). The Cytoplasmic segment spans residues 73 to 86 (TVYRTRKLHTPANY). The chain crosses the membrane as a helical span at residues 87 to 111 (LIASLAVTDLLVSILVMPISTMYTV). Residues 112-119 (TGRWTLGQ) lie on the Extracellular side of the membrane. The helical transmembrane segment at 120-145 (VVCDFWLSSDITCCTASILHLCVIAL) threads the bilayer. Cys-122 and Cys-199 form a disulfide bridge. Ergotamine contacts are provided by Asp-129 and Thr-134. Positions 146–148 (DRY) match the DRY motif; important for ligand-induced conformation changes and signaling motif. The Cytoplasmic portion of the chain corresponds to 146-165 (DRYWAITDAVEYSAKRTPKR). The chain crosses the membrane as a helical span at residues 166–184 (AAVMIALVWVFSISISLPP). The Extracellular segment spans residues 185–205 (FFWRQAKAEEEVSECVVNTDH). Residue Val-201 participates in ergotamine binding. The chain crosses the membrane as a helical span at residues 206 to 229 (ILYTVYSTVGAFYFPTLLLIALYG). The Cytoplasmic portion of the chain corresponds to 230 to 315 (RIYVEARSRI…AARERKATKT (86 aa)). A compositionally biased stretch (polar residues) spans 259–272 (DSPGSTSSVTSINS). The tract at residues 259–281 (DSPGSTSSVTSINSRVPDVPSES) is disordered. Residues 316 to 337 (LGIILGAFIVCWLPFFIISLVM) traverse the membrane as a helical segment. Residues 338–347 (PICKDACWFH) lie on the Extracellular side of the membrane. A helical membrane pass occupies residues 348–370 (LAIFDFFTWLGYLNSLINPIIYT). Residues 365 to 369 (NPIIY) carry the NPxxY motif; important for ligand-induced conformation changes and signaling motif. Topologically, residues 371–390 (MSNEDFKQAFHKLIRFKCTS) are cytoplasmic. The S-palmitoyl cysteine moiety is linked to residue Cys-388.

The protein belongs to the G-protein coupled receptor 1 family. As to quaternary structure, homodimer. Heterodimer with HTR1D. Post-translationally, phosphorylated. Desensitization of the receptor may be mediated by its phosphorylation. In terms of processing, palmitoylated. As to expression, detected in cerebral artery smooth muscle cells (at protein level). Detected in brain cortex, striatum, amygdala, medulla, hippocampus, caudate nucleus and putamen.

The protein resides in the cell membrane. G-protein coupled receptor for 5-hydroxytryptamine (serotonin). Also functions as a receptor for ergot alkaloid derivatives, various anxiolytic and antidepressant drugs and other psychoactive substances, such as lysergic acid diethylamide (LSD). Ligand binding causes a conformation change that triggers signaling via guanine nucleotide-binding proteins (G proteins) and modulates the activity of downstream effectors, such as adenylate cyclase. HTR1B is coupled to G(i)/G(o) G alpha proteins and mediates inhibitory neurotransmission by inhibiting adenylate cyclase activity. Arrestin family members inhibit signaling via G proteins and mediate activation of alternative signaling pathways. Regulates the release of 5-hydroxytryptamine, dopamine and acetylcholine in the brain, and thereby affects neural activity, nociceptive processing, pain perception, mood and behavior. Besides, plays a role in vasoconstriction of cerebral arteries. The protein is 5-hydroxytryptamine receptor 1B of Homo sapiens (Human).